A 125-amino-acid chain; its full sequence is Aspartate 1-decarboxylase 2 (125 aa).

Residue serine 25 is the Schiff-base intermediate with substrate; via pyruvic acid of the active site. Serine 25 carries the pyruvic acid (Ser) modification. Threonine 57 provides a ligand contact to substrate. The active-site Proton donor is tyrosine 58. Residue glycine 73–alanine 75 coordinates substrate.

Belongs to the PanD family. Heterooctamer of four alpha and four beta subunits. Requires pyruvate as cofactor. In terms of processing, is synthesized initially as an inactive proenzyme, which is activated by self-cleavage at a specific serine bond to produce a beta-subunit with a hydroxyl group at its C-terminus and an alpha-subunit with a pyruvoyl group at its N-terminus.

The protein resides in the cytoplasm. It catalyses the reaction L-aspartate + H(+) = beta-alanine + CO2. The protein operates within cofactor biosynthesis; (R)-pantothenate biosynthesis; beta-alanine from L-aspartate: step 1/1. In terms of biological role, catalyzes the pyruvoyl-dependent decarboxylation of aspartate to produce beta-alanine. This is Aspartate 1-decarboxylase 2 from Gloeobacter violaceus (strain ATCC 29082 / PCC 7421).